Here is a 949-residue protein sequence, read N- to C-terminus: Serine/threonine-protein kinase KIPK2 (949 aa).

Disordered stretches follow at residues 79–116 (LETSASAGTSRSTSPSNKGAMKKPFPMGTPRSPRVGPS), 323–344 (TALSSGLKGKLDNFPGSGTEKS), 407–426 (STSTENHPPSNTSHTTDKNV), and 495–525 (SSEKFDFSLSSKNSLGDYSSSTSMSEESNLS). Residues 81–94 (TSASAGTSRSTSPS) are compositionally biased toward low complexity. Polar residues-rich tracts occupy residues 407 to 420 (STSTENHPPSNTSH) and 495 to 512 (SSEKFDFSLSSKNSLGDY). Residues 513 to 525 (SSSTSMSEESNLS) show a composition bias toward low complexity. Positions 559–898 (FNLLKKLGCG…AAEIKRHPFF (340 aa)) constitute a Protein kinase domain. ATP-binding positions include 565–573 (LGCGDIGTV) and K588. Residue D684 is the Proton acceptor of the active site.

This sequence belongs to the protein kinase superfamily. Ser/Thr protein kinase family. In terms of assembly, interacts with KCBP, PERK8, PERK9, PERK10 and PERK13.

It catalyses the reaction L-seryl-[protein] + ATP = O-phospho-L-seryl-[protein] + ADP + H(+). It carries out the reaction L-threonyl-[protein] + ATP = O-phospho-L-threonyl-[protein] + ADP + H(+). Functionally, serine/threonine-protein kinase that could be involved in the negative regulation of root growth. In Arabidopsis thaliana (Mouse-ear cress), this protein is Serine/threonine-protein kinase KIPK2.